The following is a 250-amino-acid chain: AA9 family lytic polysaccharide monooxygenase E (250 aa).

The N-terminal stretch at 1–21 (MAMSKIMSLTGLLASASLVAG) is a signal peptide. Positions 22 and 107 each coordinate Cu(2+). 2 disulfides stabilise this stretch: Cys77/Cys199 and Cys118/Cys122. A glycan (N-linked (GlcNAc...) asparagine) is linked at Asn159. The O2 site is built by His185 and Gln194. Tyr196 contributes to the Cu(2+) binding site.

The protein belongs to the polysaccharide monooxygenase AA9 family. Cu(2+) is required as a cofactor.

The protein resides in the secreted. It carries out the reaction [(1-&gt;4)-beta-D-glucosyl]n+m + reduced acceptor + O2 = 4-dehydro-beta-D-glucosyl-[(1-&gt;4)-beta-D-glucosyl]n-1 + [(1-&gt;4)-beta-D-glucosyl]m + acceptor + H2O.. In terms of biological role, lytic polysaccharide monooxygenase (LPMO) that depolymerizes crystalline and amorphous polysaccharides via the oxidation of scissile alpha- or beta-(1-4)-glycosidic bonds, yielding C1 or C4 oxidation products. Catalysis by LPMOs requires the reduction of the active-site copper from Cu(II) to Cu(I) by a reducing agent and H(2)O(2) or O(2) as a cosubstrate. This chain is AA9 family lytic polysaccharide monooxygenase E, found in Aspergillus tamarii.